The primary structure comprises 134 residues: Small ribosomal subunit protein uS8c (134 aa).

It belongs to the universal ribosomal protein uS8 family. Part of the 30S ribosomal subunit.

The protein resides in the plastid. Its subcellular location is the chloroplast. Functionally, one of the primary rRNA binding proteins, it binds directly to 16S rRNA central domain where it helps coordinate assembly of the platform of the 30S subunit. The protein is Small ribosomal subunit protein uS8c (rps8) of Chloranthus spicatus (Chulantree).